The sequence spans 844 residues: RPA-related protein RADX (844 aa).

The OB DNA-binding region spans 228-331 (WHNRKNFPAL…LISTMEICLN (104 aa)). Disordered stretches follow at residues 571-609 (PASE…RPMD) and 626-664 (GPTA…TGKS). A compositionally biased stretch (polar residues) spans 572 to 587 (ASETLQNASPPSTSQA). Residues 590–608 (KEGHYHERGSKRSQDDRPM) are compositionally biased toward basic and acidic residues. Over residues 652–662 (SRENSTANATG) the composition is skewed to polar residues.

It localises to the chromosome. In terms of biological role, single-stranded DNA-binding protein recruited to replication forks to maintain genome stability. Prevents fork collapse by antagonizing the accumulation of RAD51 at forks to ensure the proper balance of fork remodeling and protection without interfering with the capacity of cells to complete homologous recombination of double-strand breaks. This Rattus norvegicus (Rat) protein is RPA-related protein RADX.